The following is a 1022-amino-acid chain: Mismatch repair endonuclease pms1 (1022 aa).

Disordered stretches follow at residues 251–282, 390–527, and 622–676; these read TGQSISNSSSSSSQSSSQLSSSSSSSSSSQSS, FNDE…EDED, and KMKQ…IDGY. Residues 403–412 are compositionally biased toward polar residues; that stretch reads KQSKISSFPN. Composition is skewed to low complexity over residues 436-469 and 647-664; these read TTTTTSSLNSPSSNKKSSNSTSSSSSSNNKNNRN and QKQQQQQQKRKQQQQQQQ.

It belongs to the DNA mismatch repair MutL/HexB family. In terms of assembly, heterodimer of pms1 and mlh1 (MutL alpha). Forms a ternary complex with MutS alpha (msh2-msh6) or MutS beta (msh2-msh3).

It is found in the nucleus. In terms of biological role, component of the post-replicative DNA mismatch repair system (MMR). Heterodimerizes with mlh1 to form MutL alpha. DNA repair is initiated by MutS alpha (msh2-msh6) or MutS beta (msh2-msh3) binding to a dsDNA mismatch, then MutL alpha is recruited to the heteroduplex. Assembly of the MutL-MutS-heteroduplex ternary complex in presence of rfc and pcna is sufficient to activate endonuclease activity of pms1. It introduces single-strand breaks near the mismatch and thus generates new entry points for the exonuclease exo1 to degrade the strand containing the mismatch. The polypeptide is Mismatch repair endonuclease pms1 (pms1) (Dictyostelium discoideum (Social amoeba)).